The sequence spans 201 residues: Outer-membrane lipoprotein LolB (201 aa).

An N-terminal signal peptide occupies residues 1-18 (MKWCRLSIILMSLILLAG). C19 is lipidated: N-palmitoyl cysteine. C19 carries S-diacylglycerol cysteine lipidation.

This sequence belongs to the LolB family. In terms of assembly, monomer.

The protein localises to the cell outer membrane. In terms of biological role, plays a critical role in the incorporation of lipoproteins in the outer membrane after they are released by the LolA protein. The chain is Outer-membrane lipoprotein LolB from Nitrosococcus oceani (strain ATCC 19707 / BCRC 17464 / JCM 30415 / NCIMB 11848 / C-107).